The chain runs to 2109 residues: General transcription factor 3C polypeptide 1 (2109 aa).

Residues 467 to 521 (LPEGEDTFLSESDSEEERSSSKRRGRGSQKDTRASANLRPKTQPHHSTPTKGGWK) are disordered. Acidic residues predominate over residues 469–482 (EGEDTFLSESDSEE). A Glycyl lysine isopeptide (Lys-Gly) (interchain with G-Cter in SUMO2) cross-link involves residue Lys529. The tract at residues 586 to 609 (MENPKESSSSLKTGRHSSGQDKPH) is disordered. Residue Ser667 is modified to Phosphoserine. Residues 718 to 727 (STANRVKTSQ) are compositionally biased toward polar residues. A disordered region spans residues 718–775 (STANRVKTSQPPVPQGEAEEDSQGKEGPSGSGDSQLSASSRSESGRMKKSDNKMGITP). Position 739 is a phosphoserine (Ser739). Residues 748 to 759 (SGDSQLSASSRS) are compositionally biased toward low complexity. Over residues 760 to 769 (ESGRMKKSDN) the composition is skewed to basic and acidic residues. Glycyl lysine isopeptide (Lys-Gly) (interchain with G-Cter in SUMO2) cross-links involve residues Lys770 and Lys833. Disordered stretches follow at residues 836–857 (SGRA…SEAP) and 1059–1082 (RKNS…ESAM). Phosphoserine is present on residues Ser1062 and Ser1068. A compositionally biased stretch (basic and acidic residues) spans 1073-1082 (SLQKEQESAM). A Glycyl lysine isopeptide (Lys-Gly) (interchain with G-Cter in SUMO2) cross-link involves residue Lys1142. The disordered stretch occupies residues 1202–1241 (SLDRNRRVRGGKSQKRKRLKKDPGKKIKRKKKGEFPGEKS). Residues 1207-1221 (RRVRGGKSQKRKRLK) show a composition bias toward basic residues. A phosphoserine mark is found at Ser1253 and Ser1611. The tract at residues 1608–1631 (KDGSLEDDEDEEDDLDEGVGGKRR) is disordered. Over residues 1612-1624 (LEDDEDEEDDLDE) the composition is skewed to acidic residues. Phosphoserine is present on residues Ser1632 and Ser1653. The span at 1823-1833 (EDADIQREDPQ) shows a compositional bias: basic and acidic residues. The tract at residues 1823 to 1961 (EDADIQREDP…GSEDPRGFTE (139 aa)) is disordered. The span at 1838-1848 (EGSSSEDSPPE) shows a compositional bias: low complexity. Phosphoserine is present on residues Ser1856, Ser1865, Ser1868, Ser1896, and Ser1911. A compositionally biased stretch (low complexity) spans 1916–1926 (LEDTAAAGAAQ). Over residues 1937–1947 (SPGQEQLSGQA) the composition is skewed to polar residues. A Phosphoserine modification is found at Ser1969.

Belongs to the TFIIIC subunit 1 family. Part of the TFIIIC subcomplex TFIIIC2, consisting of six subunits, GTF3C1, GTF3C2, GTF3C3, GTF3C4, GTF3C5 and GTF3C6. Interacts with IGHMBP2. Interacts with MAF1.

Its subcellular location is the nucleus. Its function is as follows. Required for RNA polymerase III-mediated transcription. Component of TFIIIC that initiates transcription complex assembly on tRNA and is required for transcription of 5S rRNA and other stable nuclear and cytoplasmic RNAs. Binds to the box B promoter element. This is General transcription factor 3C polypeptide 1 (GTF3C1) from Homo sapiens (Human).